We begin with the raw amino-acid sequence, 31 residues long: Cliotide T10 (31 aa).

Positions 1–31 (GIPCGESCVYIPCTVTALLGCSCKDKVCYKN) form a cross-link, cyclopeptide (Gly-Asn). 3 disulfides stabilise this stretch: C4/C21, C8/C23, and C13/C28.

Contains 3 disulfide bonds. In terms of processing, this is a cyclic peptide. In terms of tissue distribution, expressed in seed, root and nodule but not in flower, stem, shoot, leaf and pod (at protein level).

Its function is as follows. Probably participates in a plant defense mechanism. This Clitoria ternatea (Butterfly pea) protein is Cliotide T10.